A 72-amino-acid polypeptide reads, in one-letter code: Heat shock factor-binding protein 1-like protein 1 (72 aa).

Residues 12–66 (DLLQNAAENLLQEVEEHFQALTATLNLRMEEMGNRIEDLQRNVDDLMAQAGIENS) adopt a coiled-coil conformation.

Belongs to the HSBP1 family.

In Rattus norvegicus (Rat), this protein is Heat shock factor-binding protein 1-like protein 1 (Hsbp1l1).